The primary structure comprises 447 residues: Glucose-6-phosphate isomerase (447 aa).

Catalysis depends on E288, which acts as the Proton donor. Active-site residues include H309 and K423.

The protein belongs to the GPI family.

It localises to the cytoplasm. The catalysed reaction is alpha-D-glucose 6-phosphate = beta-D-fructose 6-phosphate. It functions in the pathway carbohydrate biosynthesis; gluconeogenesis. The protein operates within carbohydrate degradation; glycolysis; D-glyceraldehyde 3-phosphate and glycerone phosphate from D-glucose: step 2/4. Functionally, catalyzes the reversible isomerization of glucose-6-phosphate to fructose-6-phosphate. The protein is Glucose-6-phosphate isomerase of Lactobacillus johnsonii (strain CNCM I-12250 / La1 / NCC 533).